The chain runs to 61 residues: Temporin-MT3 (61 aa).

An N-terminal signal peptide occupies residues 1–22 (MFTLKKPLLLLFFLGTINLSLC). The propeptide at 23 to 44 (EQERNAEEERRDEPDERNAEVE) is removed in mature form. Leucine amide is present on Leu-59.

The protein belongs to the frog skin active peptide (FSAP) family. Temporin subfamily. Expressed by the skin glands.

It localises to the secreted. Antimicrobial peptide. The chain is Temporin-MT3 from Amolops mantzorum (Sichuan torrent frog).